The sequence spans 206 residues: Cytochrome b-245 chaperone 1 homolog (206 aa).

The chain crosses the membrane as a helical span at residues 21–43 (GIRSWSILVGIASVGLAAAYYSS). A disordered region spans residues 172–206 (ADDDYPDDDDGIEDLGLGDSSDSQDDPDGDDDEEH). Acidic residues-rich tracts occupy residues 174–184 (DDYPDDDDGIE) and 193–206 (DSQD…DEEH).

The protein belongs to the CYBC1 family.

It localises to the endoplasmic reticulum membrane. Functions as a chaperone necessary for a stable expression of the CYBA and CYBB subunits of the cytochrome b-245 heterodimer. In Danio rerio (Zebrafish), this protein is Cytochrome b-245 chaperone 1 homolog.